A 908-amino-acid polypeptide reads, in one-letter code: WD repeat-containing protein 44 (908 aa).

The segment at 1 to 163 (MMPLKMCTWG…SSADQLDASK (163 aa)) is binding activity. 6 positions are modified to phosphoserine: serine 17, serine 40, serine 61, serine 71, serine 86, and serine 116. Composition is skewed to polar residues over residues 108–120 (QQGSRKADSQNAA) and 148–157 (NNLTEVSSAD). Disordered stretches follow at residues 108–158 (QQGS…SADQ), 202–273 (APAK…KDNI), 309–341 (TAQENGKAPDVQTVAGEVMGPQRPRSNSGRELT), 391–418 (VSNDATQSDDEEKLQSQQTDTDGGRLKQ), and 454–474 (DEVFHTDQDDPSSSDDEGMPY). Phosphothreonine occurs at positions 151 and 211. The tract at residues 203–249 (PAKPPRHLTPEPDIVASTKKPVPARPPPPTNFPPPRPPPPSRPAPPP) is important for interaction with ARHGAP26 AND ARHGAP10. The span at 225 to 248 (PARPPPPTNFPPPRPPPPSRPAPP) shows a compositional bias: pro residues. Serine 254 carries the phosphoserine modification. A compositionally biased stretch (basic and acidic residues) spans 254–270 (SDLEFEALKTPDLDVPK). Threonine 263 carries the post-translational modification Phosphothreonine. The segment at 326–339 (VMGPQRPRSNSGRE) is important for interaction with RAB11A. 2 positions are modified to phosphoserine: serine 334 and serine 336. Residues threonine 341 and threonine 396 each carry the phosphothreonine modification. Phosphoserine is present on residues serine 398, serine 465, serine 466, and serine 467. The span at 462 to 471 (DDPSSSDDEG) shows a compositional bias: acidic residues. Phosphotyrosine is present on tyrosine 474. A WD 1 repeat occupies 504-543 (EHMGAVWTMKFSHCGRLLASAGQDNIVRIWALKNAFDYFN). Residues 552–587 (EGRVSPSPSQESLSSSKSDTDMGVCSGTDEDPDDKN) form a disordered region. Residues serine 556 and serine 560 each carry the phosphoserine modification. Residues 556–568 (SPSPSQESLSSSK) are compositionally biased toward low complexity. WD repeat units follow at residues 600–638 (GHTADLLDLSWSKNYFLLSSSMDKTVRLWHISRRECLCC), 640–680 (QHID…VALW), 685–724 (GQTKLITAANFCQNGKYAVIGTYDGRCIFYDTEHLKYHTQ), 735–774 (KVGRKITGIEPLPGENKILVTSNDSRIRLYDLRDLSLSMK), and 779–818 (VNSSSQIKASFSHDFTYLVSGSEDKYVYIWSTYHDLSKFT).

In terms of assembly, interacts preferentially with the GTP-bound form of RAB11 when membrane-associated. Interacts with GRAF1/ARHGAP26 or GRAF2/ARHGAP10; the interaction connects the endoplasmic reticulum (ER) with the endosomal tubule. Interacts with VAPA (via MSP domain) or VAPB (via MSP domain); the interaction connects the ER with the endosomal tubule. Does not bind to other Rab and Rho small G proteins. Phosphorylated by ATK1; the phosphorylation stabilizes its interaction with RAB11A and RAB11B. In terms of tissue distribution, expressed in heart; brain; spleen; lung; liver; muscle and kidney.

It is found in the cytoplasm. The protein localises to the cytosol. Its subcellular location is the perinuclear region. It localises to the endosome membrane. The protein resides in the golgi apparatus. It is found in the trans-Golgi network. Functionally, downstream effector for Rab11 which regulates Rab11 intracellular membrane trafficking functions such as endocytic recycling, intracellular ciliogenesis and protein export. ATK1-mediated phosphorylation of WDR44 induces binding to Rab11 which activates endocytic recycling of transferrin receptor back to the plasma membrane. When bound to Rab11, prevents the formation of the ciliogenic Rab11-Rabin8/RAB3IP-RAB11FIP3 complex, therefore inhibiting preciliary trafficking and ciliogenesis. May participate in neo-synthesized protein export by connecting the endoplasmic reticulum (ER) with the endosomal tubule via direct interactions with the integral ER proteins VAPA or VAPB and the endosomal protein GRAFs (GRAF1/ARHGAP26 or GRAF2/ARHGAP10), which facilitates the transfer of proteins such as E-cadherin, MPP14 and CFTR into a Rab8-Rab10-Rab11-dependent export route. The polypeptide is WD repeat-containing protein 44 (Rattus norvegicus (Rat)).